The chain runs to 706 residues: MAEFLFEIGLEEIPARMIAAAESELARRVAELLQREDLLAEGHAVTRYSTPRRLAVLVTGVKAAQADREEQLTGPAWSIAFKDGQPTPAAQAFAKKAGVEVAALQKVTTPKGEYVGASSVRKGRAANEILLEALPKEIAAIYWPKNMYWRAGKPERFVRPVQWMVALLGEQVIPVEFAGVTAANVTYGHRILHGDAPVAIPAPMEYAATLEAAKVQADVEARRHRIRKALDHVTRTVPGARWREDEALVDAVTHLTEWPSVLLGSFETEFLALPEEVLVTVMRDHQKYFAVEDAAGKLAPHFLTALNTEPSDQAAAIIRHGNERVLRARFNDARFFWTVDQKISLANRLEMLQSVTFHKELGSYHQKTHTTREIAVKLSAQVRHAGTSVDEAALLRAVELAKTDLTTELVKEFTELQGIVGGLYARAQGEGEAVAQAIYWQYSPASMDDPIPPTLEGQLLGLADRIGTIVEMFAIGLEPTGSKDPFALRRAANAVVKILAEGKLPVTLDRLLNAAEESSKVENAAASREKVMAFLKERLEFYMREVLGYRYDVVNAVLAAGAHDVVDTIARAEALSAVRGSEDFAAIAAAFKRSKNILRQAAEKAGVAEDSLSADVDAALLPEPAEKQLHEAAAKLAPVVEELRAKNDYRAALEQIATLRPQVDLFFDKVMVMVEDDLLRHNRLALIQYVLRSFSSIADFSEIVAS.

This sequence belongs to the class-II aminoacyl-tRNA synthetase family. In terms of assembly, tetramer of two alpha and two beta subunits.

It localises to the cytoplasm. The catalysed reaction is tRNA(Gly) + glycine + ATP = glycyl-tRNA(Gly) + AMP + diphosphate. In Acidobacterium capsulatum (strain ATCC 51196 / DSM 11244 / BCRC 80197 / JCM 7670 / NBRC 15755 / NCIMB 13165 / 161), this protein is Glycine--tRNA ligase beta subunit.